Consider the following 203-residue polypeptide: Endothelin-1 (203 aa).

A signal peptide spans 1–25 (MDYFPMIIALLFVAFQGAPETAVLG). Positions 26 to 50 (AELSPEAESQGETPSPHASWRPRRS) are excised as a propeptide. The tract at residues 27–48 (ELSPEAESQGETPSPHASWRPR) is disordered. Disulfide bonds link Cys-53/Cys-67 and Cys-55/Cys-63. The propeptide occupies 83–203 (YGLGSPSRSR…DKKVTHNRTH (121 aa)). The tract at residues 110 to 124 (CQCASQKDKKCWSFC) is endothelin-like. Asn-200 carries an N-linked (GlcNAc...) asparagine glycan.

This sequence belongs to the endothelin/sarafotoxin family.

The protein resides in the secreted. Functionally, endothelins are endothelium-derived vasoconstrictor peptides. Probable ligand for G-protein coupled receptors EDNRA and EDNRB which activates PTK2B, BCAR1, BCAR3 and, GTPases RAP1 and RHOA cascade in glomerular mesangial cells. Also binds the DEAR/FBXW7-AS1 receptor. Promotes mesenteric arterial wall remodeling via activation of ROCK signaling and subsequent colocalization of NFATC3 with F-actin filaments. NFATC3 then translocates to the nucleus where it subsequently promotes the transcription of the smooth muscle hypertrophy and differentiation marker ACTA2. The chain is Endothelin-1 (EDN1) from Sus scrofa (Pig).